The sequence spans 275 residues: tRNA pseudouridine synthase A (275 aa).

The active-site Nucleophile is the Asp72. Tyr133 is a substrate binding site.

It belongs to the tRNA pseudouridine synthase TruA family. As to quaternary structure, homodimer.

It carries out the reaction uridine(38/39/40) in tRNA = pseudouridine(38/39/40) in tRNA. In terms of biological role, formation of pseudouridine at positions 38, 39 and 40 in the anticodon stem and loop of transfer RNAs. The chain is tRNA pseudouridine synthase A from Gluconobacter oxydans (strain 621H) (Gluconobacter suboxydans).